Consider the following 194-residue polypeptide: Large ribosomal subunit protein uL5 (194 aa).

Belongs to the universal ribosomal protein uL5 family. In terms of assembly, part of the 50S ribosomal subunit; part of the 5S rRNA/L5/L18/L25 subcomplex. Contacts the 5S rRNA and the P site tRNA. Forms a bridge to the 30S subunit in the 70S ribosome.

Its function is as follows. This is one of the proteins that bind and probably mediate the attachment of the 5S RNA into the large ribosomal subunit, where it forms part of the central protuberance. In the 70S ribosome it contacts protein S13 of the 30S subunit (bridge B1b), connecting the 2 subunits; this bridge is implicated in subunit movement. Contacts the P site tRNA; the 5S rRNA and some of its associated proteins might help stabilize positioning of ribosome-bound tRNAs. This chain is Large ribosomal subunit protein uL5, found in Frankia alni (strain DSM 45986 / CECT 9034 / ACN14a).